A 362-amino-acid polypeptide reads, in one-letter code: Leucoanthocyanidin dioxygenase (362 aa).

The disordered stretch occupies residues 1-23; sequence MVTSAMGPSPRVEELARSGLDTI. Residues 214–313 enclose the Fe2OG dioxygenase domain; that stretch reads LIVQMKINFY…RISWAVFCEP (100 aa). Fe cation-binding residues include histidine 238, aspartate 240, and histidine 294. Arginine 304 is an active-site residue.

The protein belongs to the iron/ascorbate-dependent oxidoreductase family. Fe cation serves as cofactor. It depends on L-ascorbate as a cofactor. In terms of tissue distribution, expressed in red but not in green forma of P.frutescens. In red forma, it is predominantly expressed in stems and leaves, but not in roots.

It carries out the reaction a (2R,3S,4S)-leucoanthocyanidin + 2-oxoglutarate + O2 = a 4-H-anthocyanidin with a 3-hydroxy group + succinate + CO2 + 2 H2O. It participates in pigment biosynthesis; anthocyanin biosynthesis. Oxidation of leucoanthocyanidins into anthocyanidins. The sequence is that of Leucoanthocyanidin dioxygenase (ANS) from Perilla frutescens (Beefsteak mint).